The following is a 90-amino-acid chain: DTHKSEIAHRFNDLGRHPEYAVSVLLRHLVDEPQNLIKKHGEYGFQNALIVRXXXKAPQVSTPTLVEISRKQTALVELLKLVASTQAALA.

Residue Ser-5 is modified to Phosphoserine. Ca(2+) is bound by residues Glu-6 and Asp-13. Residues 25–90 (LLRHLVDEPQ…LVASTQAALA (66 aa)) enclose the Albumin domain. Ser-61 carries the post-translational modification Phosphoserine. Phosphothreonine is present on residues Thr-62 and Thr-64. An N6-methyllysine modification is found at Lys-80.

The protein belongs to the ALB/AFP/VDB family. As to quaternary structure, interacts with FCGRT; this interaction regulates ALB homeostasis. Interacts with TASOR. In plasma, occurs in a covalently-linked complex with chromophore-bound alpha-1-microglobulin; this interaction does not prevent fatty acid binding to ALB. Plasma.

It is found in the secreted. Functionally, binds water, Ca(2+), Na(+), K(+), fatty acids, hormones, bilirubin and drugs. Its main function is the regulation of the colloidal osmotic pressure of blood. Major zinc transporter in plasma, typically binds about 80% of all plasma zinc. Major calcium and magnesium transporter in plasma, binds approximately 45% of circulating calcium and magnesium in plasma. Potentially has more than two calcium-binding sites and might additionally bind calcium in a non-specific manner. The shared binding site between zinc and calcium suggests a crosstalk between zinc and calcium transport in the blood. The rank order of affinity is zinc &gt; calcium &gt; magnesium. Binds to the bacterial siderophore enterobactin and inhibits enterobactin-mediated iron uptake of E.coli from ferric transferrin, and may thereby limit the utilization of iron and growth of enteric bacteria such as E.coli. Does not prevent iron uptake by the bacterial siderophore aerobactin. This Capra hircus (Goat) protein is Albumin.